Reading from the N-terminus, the 963-residue chain is Importin-13 (963 aa).

20 HEAT repeats span residues 24–54 (ENVE…QAQV), 56–88 (PQAW…KISR), 95–135 (TDQY…LSMM), 142–179 (AVAD…EFQT), 194–231 (LAVE…SWVQ), 236–268 (LQDC…NAIS), 276–325 (VNTL…ALLD), 330–372 (WQSF…DDIL), 375–438 (EAEK…YEML), 440–476 (AELL…FQSI), 487–522 (VVPG…WLAD), 524–558 (PVMI…CREC), 562–600 (LPPY…LLSA), 603–648 (VEEI…SNLF), 676–716 (PVVV…VKTL), 720–754 (FAPM…VHIF), 761–803 (FPPI…ALKR), 815–845 (VKAV…TELL), 860–893 (EDGR…FALN), and 897–931 (FSLL…QQIL). The region spanning 45-111 (AQKWLMQAQV…KAQLFTQITR (67 aa)) is the Importin N-terminal domain.

Belongs to the importin beta family. In terms of assembly, interacts with UBC9, RAN, RBM8A, eIF-1A and PAX6. As to expression, expressed in fetal brain, heart, intestine and kidney.

The protein resides in the cytoplasm. It is found in the nucleus. Functionally, functions in nuclear protein import as nuclear transport receptor. Serves as receptor for nuclear localization signals (NLS) in cargo substrates. Is thought to mediate docking of the importin/substrate complex to the nuclear pore complex (NPC) through binding to nucleoporin and the complex is subsequently translocated through the pore by an energy requiring, Ran-dependent mechanism. At the nucleoplasmic side of the NPC, Ran binds to the importin, the importin/substrate complex dissociates and importin is re-exported from the nucleus to the cytoplasm where GTP hydrolysis releases Ran. The directionality of nuclear import is thought to be conferred by an asymmetric distribution of the GTP- and GDP-bound forms of Ran between the cytoplasm and nucleus. Mediates the nuclear import of UBC9, the RBM8A/MAGOH complex, PAX6 and probably other members of the paired homeobox family. Also mediates nuclear export of eIF-1A, and the cytoplasmic release of eIF-1A is triggered by the loading of import substrates onto IPO13. In Homo sapiens (Human), this protein is Importin-13 (IPO13).